The following is a 347-amino-acid chain: N-acetyl-gamma-glutamyl-phosphate reductase (347 aa).

Residue cysteine 152 is part of the active site.

The protein belongs to the NAGSA dehydrogenase family. Type 1 subfamily.

Its subcellular location is the cytoplasm. The enzyme catalyses N-acetyl-L-glutamate 5-semialdehyde + phosphate + NADP(+) = N-acetyl-L-glutamyl 5-phosphate + NADPH + H(+). It functions in the pathway amino-acid biosynthesis; L-arginine biosynthesis; N(2)-acetyl-L-ornithine from L-glutamate: step 3/4. Functionally, catalyzes the NADPH-dependent reduction of N-acetyl-5-glutamyl phosphate to yield N-acetyl-L-glutamate 5-semialdehyde. In Neisseria meningitidis serogroup C / serotype 2a (strain ATCC 700532 / DSM 15464 / FAM18), this protein is N-acetyl-gamma-glutamyl-phosphate reductase.